We begin with the raw amino-acid sequence, 891 residues long: DNA mismatch repair protein MutS (891 aa).

643–650 (GPNMGGKS) contacts ATP.

It belongs to the DNA mismatch repair MutS family.

In terms of biological role, this protein is involved in the repair of mismatches in DNA. It is possible that it carries out the mismatch recognition step. This protein has a weak ATPase activity. In Xanthomonas campestris pv. campestris (strain ATCC 33913 / DSM 3586 / NCPPB 528 / LMG 568 / P 25), this protein is DNA mismatch repair protein MutS.